A 205-amino-acid chain; its full sequence is D-alanine--D-alanine ligase (205 aa).

The 95-residue stretch at 111-205 (KHVLKSLGID…LGRAIGTMEF (95 aa)) folds into the ATP-grasp domain. 139–190 (MPYPFVIKPICGGSTIGVHAIFSRSEYLDLSVHADALEGRMLVEEYIPGQEV) contacts ATP.

The protein belongs to the D-alanine--D-alanine ligase family. Mg(2+) serves as cofactor. Mn(2+) is required as a cofactor.

The protein localises to the cytoplasm. The catalysed reaction is 2 D-alanine + ATP = D-alanyl-D-alanine + ADP + phosphate + H(+). The protein operates within cell wall biogenesis; peptidoglycan biosynthesis. Cell wall formation. This chain is D-alanine--D-alanine ligase (ddl), found in Anaplasma centrale.